The primary structure comprises 126 residues: UPF0102 protein DNO_0639 (126 aa).

It belongs to the UPF0102 family.

This Dichelobacter nodosus (strain VCS1703A) protein is UPF0102 protein DNO_0639.